The chain runs to 162 residues: Selenoprotein F (162 aa).

The N-terminal stretch at Met1–Ala28 is a signal peptide. Position 93 (Sec93) is a non-standard amino acid, selenocysteine.

This sequence belongs to the selenoprotein M/F family. As to quaternary structure, forms a tight complex with UGGT1/UGCGL1. Interacts with UGGT2/UGCGL2. Interacts with RDH11. As to expression, highest levels in prostate, lower levels in brain, lung, thyroid gland, and large intestine.

The protein resides in the endoplasmic reticulum lumen. Functionally, may be involved in redox reactions associated with the formation of disulfide bonds. May contribute to the quality control of protein folding in the endoplasmic reticulum. May regulate protein folding by enhancing the catalytic activity of UGGT1/UGCGL1 and UGGT2/UGCGL2. The polypeptide is Selenoprotein F (Rattus norvegicus (Rat)).